A 424-amino-acid chain; its full sequence is N-succinylarginine dihydrolase (424 aa).

Substrate contacts are provided by residues 19–28 (AGLSPGNIAS), asparagine 110, and 137–138 (HR). Residue glutamate 174 is part of the active site. Arginine 207 is a substrate binding site. Histidine 240 is an active-site residue. Substrate contacts are provided by aspartate 242 and asparagine 349. Cysteine 355 serves as the catalytic Nucleophile.

It belongs to the succinylarginine dihydrolase family. Homodimer.

It carries out the reaction N(2)-succinyl-L-arginine + 2 H2O + 2 H(+) = N(2)-succinyl-L-ornithine + 2 NH4(+) + CO2. It functions in the pathway amino-acid degradation; L-arginine degradation via AST pathway; L-glutamate and succinate from L-arginine: step 2/5. Catalyzes the hydrolysis of N(2)-succinylarginine into N(2)-succinylornithine, ammonia and CO(2). The polypeptide is N-succinylarginine dihydrolase (Rhizorhabdus wittichii (strain DSM 6014 / CCUG 31198 / JCM 15750 / NBRC 105917 / EY 4224 / RW1) (Sphingomonas wittichii)).